A 512-amino-acid polypeptide reads, in one-letter code: Acid-sensing ion channel 2 (512 aa).

Over Met-1 to Pro-37 the chain is Cytoplasmic. Phosphoserine occurs at positions 8 and 11. The chain crosses the membrane as a helical span at residues Leu-38–Val-58. Over Glu-59–Ala-427 the chain is Extracellular. Intrachain disulfides connect Cys-92–Cys-193, Cys-289–Cys-364, Cys-307–Cys-360, Cys-311–Cys-358, Cys-320–Cys-342, and Cys-322–Cys-334. Asn-365 and Asn-392 each carry an N-linked (GlcNAc...) asparagine glycan. A helical membrane pass occupies residues Leu-428–Leu-448. A GAS motif; ion selectivity filter motif is present at residues Gly-441–Ser-443. At Glu-449–Cys-512 the chain is on the cytoplasmic side.

The protein belongs to the amiloride-sensitive sodium channel (TC 1.A.6) family. ASIC2 subfamily. As to quaternary structure, can form homotrimers. Heterotrimer; forms functional heterotrimers producing channel with different properties. Forms heterotrimers with ASIC1; while ASIC1 determines current amplitude, ASIC2 influences the properties of the current. Forms heterotrimers with ASIC3; resulting in channels with distinct properties. Interacts with STOM; STOM regulates the gating of ASIC2-containing channels. Interacts with PICK1; promotes ASIC3 phosphorylation by PKC and activation of ASIC2/ASIC3 heterotrimers. In terms of tissue distribution, expressed in sciatic nerve and dorsal root ganglion (DRG) (at protein level). Both isoforms display the same expression pattern except in DRG where isoform 2 is more abundantly expressed. Widely distributed throughout the brain. Highly expressed in the main olfactory bulb, neo- and allo-cortical regions, hippocampal formation, habenula, basolateral amygdaloid nuclei, and cerebellum. In the olfactory system, expressed in the glomerular cell layer, the internal granular layer, and the mitral and internal plexiform cell layers. Within the glomerular layer, restricted to the periglomerular cells. In the neocortex, strongly expressed in the large pyramidal neurons in all cortical layers as well as in the oligo-, astro-, or micro-glia cells. In the hippocampal formation, expressed in dentate granule cells and hilar neurons, as well as in pyramidal cells of CA1-CA3 subfields. Expressed in stratum oriens and radiatum of all subfields. Within the thalamus, expressed moderately in the medial and lateral habenula. In the cerebellar cortex expressed in Purkinje cells and granule cells. Expressed at low levels in choroid plexus.

It is found in the cell membrane. It catalyses the reaction Na(+)(in) = Na(+)(out). It carries out the reaction K(+)(in) = K(+)(out). The enzyme catalyses Li(+)(in) = Li(+)(out). With respect to regulation, inhibited by the diuretic drug amiloride. Inhibited by gadolinium ions, the heterotrimer with ASIC3 being more sensitive. Zn(2+) potentiates the acid activation of ASIC2-containing homomeric and heteromeric channels. The snake venom mambalgin-1 and mambalgin-2 inhibit the homotrimers composed of ASIC1 and ASIC2 and have strong analgesic effects. Its function is as follows. Forms pH-gated trimeric sodium channels that act as postsynaptic excitatory sensors in the nervous system. Upon extracellular acidification, these channels generate rapid, transient inward currents that fully desensitize. Highly selective for sodium, they are permeable to other cations. By forming heterotrimeric channels with ASIC1, could contribute to synaptic plasticity, learning, and memory. Additionally, as acid sensors at nerve terminals, plays a role in mechanosensation and phototransduction. Has no pH-gated sodium channel activity per se but can associate with other ASICs to produce functional channels with specific properties. The chain is Acid-sensing ion channel 2 from Rattus norvegicus (Rat).